The primary structure comprises 849 residues: Disks large homolog 3 (849 aa).

Positions 32–101 are disordered; that stretch reads DWQVPDPYGP…GKSTPKLNGS (70 aa). Residues 41–53 are compositionally biased toward gly residues; sequence PSGGNGASSGYGG. Positions 57–69 are enriched in polar residues; the sequence is QTLPSQAGATPTP. 3 PDZ domains span residues 149-235, 244-330, and 404-484; these read EIVL…VRRR, EVNL…VAKP, and KIIL…AQYR. The residue at position 157 (Ser157) is a Phosphoserine. An SH3 domain is found at 519 to 589; it reads KRSLYVRALF…PSKKRVEKKE (71 aa). Positions 659–834 constitute a Guanylate kinase-like domain; the sequence is ARPVIILGPM…IYNKIKQIIE (176 aa). Tyr705 carries the post-translational modification Phosphotyrosine.

Belongs to the MAGUK family. As to quaternary structure, interacts through its PDZ domains with NETO1, GRIN2B, SYNGAP1 and APC. Interacts through its first two PDZ domains with ERBB4. Interacts through its third PDZ domain with NLGN1, and probably with NLGN2 and NLGN3. Interacts through its guanylate kinase-like domain with DLGAP1, DLGAP2, DLGAP3 and DLGAP4. Interacts with FRMPD4 (via C-terminus). Interacts with LRFN1, LRFN2 and LRFN4. Interacts with FLTP. Interacts with GPR85. Interacts with DGKI (via PDZ-binding motif).

Its function is as follows. Required for learning most likely through its role in synaptic plasticity following NMDA receptor signaling. The chain is Disks large homolog 3 (Dlg3) from Mus musculus (Mouse).